Consider the following 189-residue polypeptide: Thermostable direct hemolysin 2 (189 aa).

An N-terminal signal peptide occupies residues 1 to 24; the sequence is MKYRYFAKKSFLFISMLAAFKTFA. The cysteines at positions 175 and 185 are disulfide-linked.

This sequence belongs to the TDH hemolysin family. Homodimer.

Its function is as follows. Bacterial hemolysins are exotoxins that attack blood cell membranes and cause cell rupture by mechanisms not clearly defined. The polypeptide is Thermostable direct hemolysin 2 (tdh2) (Vibrio parahaemolyticus serotype O3:K6 (strain RIMD 2210633)).